The primary structure comprises 390 residues: S-adenosylmethionine synthase 2 (390 aa).

E9 is a binding site for Mg(2+). H15 is a binding site for ATP. A K(+)-binding site is contributed by E43. The L-methionine site is built by E56 and Q99. ATP-binding positions include 167 to 169, 235 to 238, D246, 252 to 253, A269, K273, and K277; these read DGK, SGRF, and RK. L-methionine is bound at residue D246. K277 is an L-methionine binding site.

This sequence belongs to the AdoMet synthase family. In terms of assembly, homotetramer. Mn(2+) serves as cofactor. The cofactor is Mg(2+). It depends on Co(2+) as a cofactor. K(+) is required as a cofactor.

It is found in the cytoplasm. It carries out the reaction L-methionine + ATP + H2O = S-adenosyl-L-methionine + phosphate + diphosphate. Its pathway is amino-acid biosynthesis; S-adenosyl-L-methionine biosynthesis; S-adenosyl-L-methionine from L-methionine: step 1/1. Catalyzes the formation of S-adenosylmethionine from methionine and ATP. The reaction comprises two steps that are both catalyzed by the same enzyme: formation of S-adenosylmethionine (AdoMet) and triphosphate, and subsequent hydrolysis of the triphosphate. The chain is S-adenosylmethionine synthase 2 (SAM2) from Actinidia chinensis var. chinensis (Chinese soft-hair kiwi).